Reading from the N-terminus, the 341-residue chain is Ras association domain-containing protein 6 (341 aa).

Ser155 carries the phosphoserine modification. Residues 190–278 form the Ras-associating domain; sequence YDHETSIFTP…ARIFLMDKDA (89 aa). The SARAH domain maps to 285 to 332; that stretch reads VAPYINFHFSFLKSILQRLDEEEKMEIERIMAKFNTERAFILKCLQSK.

In terms of assembly, interacts with MOAP1. Interaction with activated KRAS is still a matter of debate.

In terms of biological role, involved in the induction of apoptosis. May act as a Ras effector protein. May suppress the serum-induced basal levels of NF-kappa-B. The protein is Ras association domain-containing protein 6 (Rassf6) of Rattus norvegicus (Rat).